A 238-amino-acid polypeptide reads, in one-letter code: Probable solute-binding protein AdeT2 (238 aa).

This sequence belongs to the bacterial solute-binding protein 7 family.

Functionally, mediates antimicrobial resistance via active efflux. Contributes to resistance to antibiotics such as chloramphenicol, erythromycin and novobiocin. May be part of a tripartite ATP-independent periplasmic (TRAP) transport system. The protein is Probable solute-binding protein AdeT2 of Acinetobacter baumannii.